The chain runs to 478 residues: Protein nucleotidyltransferase YdiU (478 aa).

ATP contacts are provided by G84, G86, R87, K107, D119, G120, R170, and R177. D246 serves as the catalytic Proton acceptor. Positions 247 and 256 each coordinate Mg(2+). Residue D256 participates in ATP binding.

The protein belongs to the SELO family. The cofactor is Mg(2+). Mn(2+) serves as cofactor.

It catalyses the reaction L-seryl-[protein] + ATP = 3-O-(5'-adenylyl)-L-seryl-[protein] + diphosphate. The catalysed reaction is L-threonyl-[protein] + ATP = 3-O-(5'-adenylyl)-L-threonyl-[protein] + diphosphate. It carries out the reaction L-tyrosyl-[protein] + ATP = O-(5'-adenylyl)-L-tyrosyl-[protein] + diphosphate. The enzyme catalyses L-histidyl-[protein] + UTP = N(tele)-(5'-uridylyl)-L-histidyl-[protein] + diphosphate. It catalyses the reaction L-seryl-[protein] + UTP = O-(5'-uridylyl)-L-seryl-[protein] + diphosphate. The catalysed reaction is L-tyrosyl-[protein] + UTP = O-(5'-uridylyl)-L-tyrosyl-[protein] + diphosphate. Its function is as follows. Nucleotidyltransferase involved in the post-translational modification of proteins. It can catalyze the addition of adenosine monophosphate (AMP) or uridine monophosphate (UMP) to a protein, resulting in modifications known as AMPylation and UMPylation. This Escherichia coli O17:K52:H18 (strain UMN026 / ExPEC) protein is Protein nucleotidyltransferase YdiU.